Consider the following 157-residue polypeptide: 3-dehydroquinate dehydratase (157 aa).

Residue Tyr-24 is the Proton acceptor of the active site. Substrate-binding residues include Asn-75, His-81, and Asp-88. His-101 functions as the Proton donor in the catalytic mechanism. Residues 102-103 (LS) and Arg-112 contribute to the substrate site.

Belongs to the type-II 3-dehydroquinase family. In terms of assembly, homododecamer.

It carries out the reaction 3-dehydroquinate = 3-dehydroshikimate + H2O. It participates in metabolic intermediate biosynthesis; chorismate biosynthesis; chorismate from D-erythrose 4-phosphate and phosphoenolpyruvate: step 3/7. Its function is as follows. Catalyzes a trans-dehydration via an enolate intermediate. This Brucella canis (strain ATCC 23365 / NCTC 10854 / RM-666) protein is 3-dehydroquinate dehydratase.